The sequence spans 242 residues: Biosynthetic peptidoglycan transglycosylase (242 aa).

The chain crosses the membrane as a helical span at residues 12–31; that stretch reads LLFWLMLASALLVLALRWLP.

It belongs to the glycosyltransferase 51 family.

The protein resides in the cell inner membrane. The enzyme catalyses [GlcNAc-(1-&gt;4)-Mur2Ac(oyl-L-Ala-gamma-D-Glu-L-Lys-D-Ala-D-Ala)](n)-di-trans,octa-cis-undecaprenyl diphosphate + beta-D-GlcNAc-(1-&gt;4)-Mur2Ac(oyl-L-Ala-gamma-D-Glu-L-Lys-D-Ala-D-Ala)-di-trans,octa-cis-undecaprenyl diphosphate = [GlcNAc-(1-&gt;4)-Mur2Ac(oyl-L-Ala-gamma-D-Glu-L-Lys-D-Ala-D-Ala)](n+1)-di-trans,octa-cis-undecaprenyl diphosphate + di-trans,octa-cis-undecaprenyl diphosphate + H(+). The protein operates within cell wall biogenesis; peptidoglycan biosynthesis. Its function is as follows. Peptidoglycan polymerase that catalyzes glycan chain elongation from lipid-linked precursors. This is Biosynthetic peptidoglycan transglycosylase from Ectopseudomonas mendocina (strain ymp) (Pseudomonas mendocina).